A 218-amino-acid chain; its full sequence is 3-oxo-tetronate 4-phosphate decarboxylase (218 aa).

The active-site Proton acceptor is Glu86. Positions 86, 105, and 107 each coordinate Zn(2+). Tyr132 (proton donor) is an active-site residue. His172 is a binding site for Zn(2+).

This sequence belongs to the aldolase class II family. AraD/FucA subfamily. The cofactor is Zn(2+).

It carries out the reaction 3-dehydro-4-O-phospho-D-erythronate + H(+) = dihydroxyacetone phosphate + CO2. The enzyme catalyses 3-dehydro-4-O-phospho-L-erythronate + H(+) = dihydroxyacetone phosphate + CO2. Its function is as follows. Catalyzes the decarboxylation of 3-oxo-tetronate 4-phosphate to dihydroxyacetone phosphate (DHAP) and CO(2). In Pectobacterium atrosepticum (strain SCRI 1043 / ATCC BAA-672) (Erwinia carotovora subsp. atroseptica), this protein is 3-oxo-tetronate 4-phosphate decarboxylase.